The chain runs to 740 residues: Phosphoribosylformylglycinamidine synthase subunit PurL (740 aa).

Residue H55 is part of the active site. Residues Y58 and K97 each contribute to the ATP site. E99 contributes to the Mg(2+) binding site. Substrate-binding positions include 100 to 103 and R122; that span reads SHNH. The Proton acceptor role is filled by H101. D123 contacts Mg(2+). Q246 is a binding site for substrate. D276 serves as a coordination point for Mg(2+). 320–322 is a binding site for substrate; the sequence is ESQ. Residues D501 and G538 each contribute to the ATP site. N539 serves as a coordination point for Mg(2+). Position 541 (S541) interacts with substrate.

This sequence belongs to the FGAMS family. As to quaternary structure, monomer. Part of the FGAM synthase complex composed of 1 PurL, 1 PurQ and 2 PurS subunits.

The protein resides in the cytoplasm. The enzyme catalyses N(2)-formyl-N(1)-(5-phospho-beta-D-ribosyl)glycinamide + L-glutamine + ATP + H2O = 2-formamido-N(1)-(5-O-phospho-beta-D-ribosyl)acetamidine + L-glutamate + ADP + phosphate + H(+). It participates in purine metabolism; IMP biosynthesis via de novo pathway; 5-amino-1-(5-phospho-D-ribosyl)imidazole from N(2)-formyl-N(1)-(5-phospho-D-ribosyl)glycinamide: step 1/2. Its function is as follows. Part of the phosphoribosylformylglycinamidine synthase complex involved in the purines biosynthetic pathway. Catalyzes the ATP-dependent conversion of formylglycinamide ribonucleotide (FGAR) and glutamine to yield formylglycinamidine ribonucleotide (FGAM) and glutamate. The FGAM synthase complex is composed of three subunits. PurQ produces an ammonia molecule by converting glutamine to glutamate. PurL transfers the ammonia molecule to FGAR to form FGAM in an ATP-dependent manner. PurS interacts with PurQ and PurL and is thought to assist in the transfer of the ammonia molecule from PurQ to PurL. The polypeptide is Phosphoribosylformylglycinamidine synthase subunit PurL (Lacticaseibacillus casei (Lactobacillus casei)).